The following is a 494-amino-acid chain: Sphingosine-1-phosphate transporter MFSD2B (494 aa).

A compositionally biased stretch (pro residues) spans 1-12 (MSVPHGPTPAPV). Residues 1 to 26 (MSVPHGPTPAPVAEPHTQEPGSDKRD) are disordered. Transmembrane regions (helical) follow at residues 103–123 (LMPWALGCMPLIALAYFFLWF), 140–160 (CLFQALATFFQVPYTALTMIL), 179–199 (MAGTLMGATVHGLIVSSAHGS), 223–243 (IAAAVVALTYPVCGSLLCLGV), 277–297 (VVSFLFISAAVQVEQSYLVLF), 310–330 (NLVLIILVSAVLSTPLWEWVL), 339–359 (AFGICVMVPFSILLAAVPSAP), 360–380 (VAYVVAFVSGVSIAVSLLLPW), 402–422 (TIFYSSYVFFTKLSGAGALGI), and 449–469 (VLIGAVPTCMILIGLCILLVG). A disordered region spans residues 473-494 (KMPRQDTSSQLSLRRRTSYSLA). Positions 485–494 (LRRRTSYSLA) are enriched in basic residues.

This sequence belongs to the major facilitator superfamily. Widely expressed with highest expression in spleen, lung and testis. Predominantly expressed in erythroid lineages giving rise to erythrocytes and platelets, but absent in lymphoid lineages.

It is found in the cell membrane. The catalysed reaction is sphing-4-enine 1-phosphate(in) = sphing-4-enine 1-phosphate(out). The enzyme catalyses sphinganine 1-phosphate(in) = sphinganine 1-phosphate(out). It carries out the reaction sphinga-4E,14Z-dienine-1-phosphate(in) = sphinga-4E,14Z-dienine-1-phosphate(out). Functionally, lipid transporter that specifically mediates export of sphingosine-1-phosphate in red blood cells and platelets. Sphingosine-1-phosphate is a signaling sphingolipid and its export from red blood cells into in the plasma is required for red blood cell morphology. Sphingosine-1-phosphate export from platelets is required for platelet aggregation and thrombus formation. Mediates the export of different sphingosine-1-phosphate (S1P) species, including S1P(d18:0) (sphinganine 1-phosphate), S1P (d18:1) (sphing-4-enine 1-phosphate) and S1P (d18:2) (sphinga-4E,14Z-dienine-1-phosphate). Release of sphingosine-1-phosphate is facilitated by a proton gradient. In contrast, cations, such as sodium, are not required to drive sphingosine-1-phosphate transport. In addition to export, also able to mediate S1P import. Does not transport lysophosphatidylcholine (LPC). The polypeptide is Sphingosine-1-phosphate transporter MFSD2B (Mus musculus (Mouse)).